The following is a 644-amino-acid chain: 1-deoxy-D-xylulose-5-phosphate synthase (644 aa).

Thiamine diphosphate is bound by residues histidine 78 and 120-122 (GHA). Aspartate 150 is a binding site for Mg(2+). Thiamine diphosphate is bound by residues 151–152 (AA), asparagine 179, and glutamate 374. Asparagine 179 contacts Mg(2+).

The protein belongs to the transketolase family. DXPS subfamily. Homodimer. Mg(2+) is required as a cofactor. Thiamine diphosphate serves as cofactor.

It carries out the reaction D-glyceraldehyde 3-phosphate + pyruvate + H(+) = 1-deoxy-D-xylulose 5-phosphate + CO2. The protein operates within metabolic intermediate biosynthesis; 1-deoxy-D-xylulose 5-phosphate biosynthesis; 1-deoxy-D-xylulose 5-phosphate from D-glyceraldehyde 3-phosphate and pyruvate: step 1/1. Its function is as follows. Catalyzes the acyloin condensation reaction between C atoms 2 and 3 of pyruvate and glyceraldehyde 3-phosphate to yield 1-deoxy-D-xylulose-5-phosphate (DXP). This is 1-deoxy-D-xylulose-5-phosphate synthase from Chlamydia pneumoniae (Chlamydophila pneumoniae).